The primary structure comprises 111 residues: uncharacterized protein (111 aa).

The segment at 66 to 94 (PVPTATPSLPRSGFTSSAKKIKESRKQKS) is disordered. The segment covering 70 to 83 (ATPSLPRSGFTSSA) has biased composition (polar residues).

The protein resides in the plastid. Its subcellular location is the chloroplast. This is an uncharacterized protein from Chlamydomonas reinhardtii (Chlamydomonas smithii).